A 624-amino-acid chain; its full sequence is Kelch-like ECH-associated protein 1 (624 aa).

Position 38 is an S-(2-succinyl)cysteine (cysteine 38). The region spanning 77-149 (CDVTLQVKYE…AYTASISVGE (73 aa)) is the BTB domain. Arginine 135 is covalently cross-linked (N5-[4-(S-L-cysteinyl)-5-methyl-1H-imidazol-2-yl]-L-ornithine (Arg-Cys) (interchain with C-151 in KEAP1)). At cysteine 151 the chain carries S-(2,3-dicarboxypropyl)cysteine; alternate. Residue cysteine 151 is modified to S-(2-succinyl)cysteine; alternate. The residue at position 151 (cysteine 151) is an S-nitrosocysteine; alternate. Residue cysteine 151 forms an N5-[4-(S-L-cysteinyl)-5-methyl-1H-imidazol-2-yl]-L-ornithine (Cys-Arg) (interchain with R-135 in KEAP1) linkage. The BACK domain maps to 184 to 286 (AIGIANFAEQ…TPRFLQTQLQ (103 aa)). An S-(2-succinyl)cysteine modification is found at cysteine 241. Residues cysteine 257 and cysteine 273 each carry the S-(2,3-dicarboxypropyl)cysteine modification. Cysteine 288 is modified (S-(2,3-dicarboxypropyl)cysteine; alternate). An S-(2-succinyl)cysteine; alternate modification is found at cysteine 288. Cysteine 319 carries the S-(2-succinyl)cysteine modification. Kelch repeat units follow at residues 327–372 (LIYT…VVGG), 373–423 (LLYA…VIDG), 424–470 (HIYA…VLNR), 471–517 (LLYA…VLHN), 519–564 (IYAA…VHQG), and 565–611 (KIYV…VTME). Cysteine 434 carries the S-cGMP-cysteine modification. At cysteine 613 the chain carries S-(2-succinyl)cysteine.

This sequence belongs to the KEAP1 family. In terms of assembly, component of the BCR(KEAP1) E3 ubiquitin ligase complex, at least composed of 2 molecules of CUL3, 2 molecules of KEAP1, and RBX1. Interacts with NFE2L2/NRF2; the interaction is direct. Forms a ternary complex with NFE2L2/NRF2 and PGAM5. Interacts with (phosphorylated) SQSTM1/p62; the interaction is direct and inactivates the BCR(KEAP1) complex by sequestering it in inclusion bodies, promoting its degradation. Interacts with NFE2L1. Interacts with BPTF and PTMA. Interacts with MAP1LC3B. Interacts indirectly with ENC1. Interacts with SESN1 and SESN2. Interacts with HSP90AA1 and HSP90AB1. Interacts with PGCKA1; this interaction prevents the ubiquitination of KEAP1 by TRIM25, thus protecting KEAP1 from degradation. Non-enzymatic covalent modifications of reactive cysteines by electrophile metabolites inactivate the BCR(KEAP1) complex. Accumulation of fumarate promotes the formation of cysteine S-succination (S-(2-succinyl)cysteine), leading to inactivate the BCR(KEAP1) complex and promote NFE2L2/NRF2 nuclear accumulation and activation. Nitric oxide-dependent 8-Nitro-cGMP formation promotes cysteine guanylation (S-cGMP-cysteine), leading to NFE2L2/NRF2 nuclear accumulation and activation. Itaconate, an anti-inflammatory metabolite generated in response to lipopolysaccharide, alkylates cysteines, activating NFE2L2/NRF2. Methylglyoxal, a reactive metabolite that accumulates when the glycolytic enzyme PGK1 is inhibited, promotes formation of a methylimidazole cross-link between proximal Cys-151 and Arg-135 on another KEAP1 molecule, resulting in an inactive dimer that inactivates the BCR(KEAP1) complex. Post-translationally, degraded via a proteasomal-independent process during selective autophagy: interaction with phosphorylated SQSTM1/p62 sequesters KEAP1 in inclusion bodies, leading to its degradation. In terms of processing, auto-ubiquitinated by the BCR(KEAP1) complex. Quinone-induced oxidative stress, but not sulforaphane, increases its ubiquitination. Ubiquitination and subsequent degradation is most pronounced following prolonged exposure of cells to oxidative stress, particularly in glutathione-deficient cells that are highly susceptible to oxidative stress. Deubiquitinated by USP25; leading to stabilization. Ubiquitinated by TRIM25; leading to degradation upon ER stress.

The protein resides in the cytoplasm. Its subcellular location is the nucleus. It functions in the pathway protein modification; protein ubiquitination. Ubiquitin ligase activity of the BCR(KEAP1) complex is inhibited by oxidative stress and electrophile metabolites such as sulforaphane. Electrophile metabolites react with reactive cysteine residues in KEAP1 and trigger non-enzymatic covalent modifications of these cysteine residues, leading to inactivate the ubiquitin ligase activity of the BCR(KEAP1) complex. Selective autophagy also inactivates the BCR(KEAP1) complex via interaction between KEAP1 and SQSTM1/p62, which sequesters the complex in inclusion bodies and promotes its degradation. Its function is as follows. Substrate-specific adapter of a BCR (BTB-CUL3-RBX1) E3 ubiquitin ligase complex that regulates the response to oxidative stress by targeting NFE2L2/NRF2 for ubiquitination. KEAP1 acts as a key sensor of oxidative and electrophilic stress: in normal conditions, the BCR(KEAP1) complex mediates ubiquitination and degradation of NFE2L2/NRF2, a transcription factor regulating expression of many cytoprotective genes. In response to oxidative stress, different electrophile metabolites trigger non-enzymatic covalent modifications of highly reactive cysteine residues in KEAP1, leading to inactivate the ubiquitin ligase activity of the BCR(KEAP1) complex, promoting NFE2L2/NRF2 nuclear accumulation and expression of phase II detoxifying enzymes. In response to selective autophagy, KEAP1 is sequestered in inclusion bodies following its interaction with SQSTM1/p62, leading to inactivation of the BCR(KEAP1) complex and activation of NFE2L2/NRF2. The BCR(KEAP1) complex also mediates ubiquitination of SQSTM1/p62, increasing SQSTM1/p62 sequestering activity and degradation. The BCR(KEAP1) complex also targets BPTF and PGAM5 for ubiquitination and degradation by the proteasome. The protein is Kelch-like ECH-associated protein 1 of Mus musculus (Mouse).